Consider the following 114-residue polypeptide: Small ribosomal subunit protein uS15 (114 aa).

The protein belongs to the universal ribosomal protein uS15 family.

The protein is Small ribosomal subunit protein uS15 (RpS13) of Musca domestica (House fly).